Reading from the N-terminus, the 90-residue chain is DNA-binding protein HU-alpha (90 aa).

The protein belongs to the bacterial histone-like protein family. In terms of assembly, heterodimer of an alpha and a beta chain.

Its function is as follows. Histone-like DNA-binding protein which is capable of wrapping DNA to stabilize it, and thus to prevent its denaturation under extreme environmental conditions. The polypeptide is DNA-binding protein HU-alpha (hupA) (Aeromonas hydrophila).